Reading from the N-terminus, the 757-residue chain is Xaa-Pro dipeptidyl-peptidase (757 aa).

Active-site charge relay system residues include Ser348, Asp468, and His498.

It belongs to the peptidase S15 family. In terms of assembly, homodimer.

It is found in the cytoplasm. It carries out the reaction Hydrolyzes Xaa-Pro-|- bonds to release unblocked, N-terminal dipeptides from substrates including Ala-Pro-|-p-nitroanilide and (sequentially) Tyr-Pro-|-Phe-Pro-|-Gly-Pro-|-Ile.. Its function is as follows. Removes N-terminal dipeptides sequentially from polypeptides having unsubstituted N-termini provided that the penultimate residue is proline. The polypeptide is Xaa-Pro dipeptidyl-peptidase (Streptococcus pneumoniae (strain Hungary19A-6)).